The chain runs to 146 residues: Hemoglobin subunit beta-S/F (146 aa).

Valine 1 carries the N-acetylvaline modification. A Globin domain is found at 2-146; it reads HLTDGEKNAI…VANALSHKYH (145 aa). Position 44 is a phosphoserine (serine 44). N6-acetyllysine is present on lysine 59. A heme b-binding site is contributed by histidine 63. At lysine 82 the chain carries N6-acetyllysine. Histidine 92 lines the heme b pocket. The residue at position 93 (cysteine 93) is an S-nitrosocysteine. Residue lysine 144 is modified to N6-acetyllysine.

Belongs to the globin family. As to quaternary structure, heterotetramer of two alpha chains and two beta chains. Red blood cells.

Functionally, involved in oxygen transport from the lung to the various peripheral tissues. The polypeptide is Hemoglobin subunit beta-S/F (Urocitellus townsendii (Townsend's ground squirrel)).